A 477-amino-acid polypeptide reads, in one-letter code: MKILFVAAEGAPFSKTGGLGDVIGALPKSLVKAGHEVAVILPYYDMVEAKFGNQIEDVLHFEVSVGWRRQYCGIKKTVLNGVTFYFIDNQYYFFRGHVYGDFDDGERFAFFQLAAIEAMERIDFIPDLLHVHDYHTAMIPFLLKEKYCWIQAYEDIETVLTIHNLEFQGQFSEGMLGDLFGVGLERYADGTLRWNNCLNWMKAGILYANRVSTVSPSYAHEIMTSQFGCNLDQILKMESGKVSGIVNGIDADLYNPQTDALLDYHFNQEDLSGKAKNKAKLQERVGLPVRADVPLVGIVSRLTRQKGFDVVVESLHHILQEDVQIVLLGTGDPAFEGAFSWFAQIYPGKLSANITFDVKLAQEIYAACDLFLMPSRFEPCGLSQMMAMRYGTLPLVHEVGGLRDTVRAFNPIEGSGTGFSFDNLSPYWLNWTFQTALDLYRNHPDIWRNLQKQAMESDFSWDTACKSYLDLYHSLVN.

Lysine 15 is an ADP-alpha-D-glucose binding site.

It belongs to the glycosyltransferase 1 family. Bacterial/plant glycogen synthase subfamily.

The enzyme catalyses [(1-&gt;4)-alpha-D-glucosyl](n) + ADP-alpha-D-glucose = [(1-&gt;4)-alpha-D-glucosyl](n+1) + ADP + H(+). The protein operates within glycan biosynthesis; glycogen biosynthesis. Functionally, synthesizes alpha-1,4-glucan chains using ADP-glucose. The chain is Glycogen synthase from Streptococcus pneumoniae (strain ATCC 700669 / Spain 23F-1).